The following is a 654-amino-acid chain: Endoplasmic reticulum chaperone BiP (654 aa).

Residues 1–18 form the signal peptide; that stretch reads MKLSLVAAMLLLLSAARA. Positions 1 to 80 are required for interaction with ELAPOR1; the sequence is MKLSLVAAML…EGERLIGDAA (80 aa). 36 to 39 serves as a coordination point for ATP; the sequence is GTTY. S86 is subject to Phosphoserine. ATP is bound at residue K96. Position 125 is an N6-acetyllysine (K125). The interval 125–280 is nucleotide-binding (NBD); that stretch reads KPYIQVDIGG…KKKTGKDVRK (156 aa). 3'-nitrotyrosine is present on Y160. Residue K213 is modified to N6-acetyllysine. 227-229 serves as a coordination point for ATP; sequence GGT. Residue K271 is modified to N6-acetyllysine. 293 to 300 provides a ligand contact to ATP; sequence EKAKRALS. K326 is subject to N6-acetyllysine. K352 participates in a covalent cross-link: Glycyl lysine isopeptide (Lys-Gly) (interchain with G-Cter in SUMO2). K353 carries the post-translational modification N6-acetyllysine; alternate. A Glycyl lysine isopeptide (Lys-Gly) (interchain with G-Cter in SUMO1); alternate cross-link involves residue K353. 364–367 is a binding site for ATP; that stretch reads GSTR. The interdomain linker stretch occupies residues 409-419; that stretch reads QDTGDLALLDV. The tract at residues 420–500 is substrate-binding (SBD); that stretch reads CPLTLGIETV…PRGVPQIEVT (81 aa). Position 447 is an N6-succinyllysine (K447). The residue at position 492 (R492) is an Omega-N-methylarginine. At T518 the chain carries O-AMP-threonine; alternate. T518 bears the Phosphothreonine; alternate mark. At K585 the chain carries N6,N6,N6-trimethyllysine; by METTL21A; in vitro. K585 is modified (N6,N6-dimethyllysine; alternate). Residue K585 is modified to N6-methyllysine; alternate. An N6-methyllysine modification is found at K591. Residues 633–654 form a disordered region; that stretch reads KLYGSAGPPPTGEEDTAEKDEL. Residues T643 and T648 each carry the phosphothreonine modification. The span at 644-654 shows a compositional bias: acidic residues; the sequence is GEEDTAEKDEL. A Prevents secretion from ER motif is present at residues 651–654; the sequence is KDEL.

Belongs to the heat shock protein 70 family. In terms of assembly, monomer and homooligomer; homooligomerization via the interdomain linker inactivates the chaperone activity and acts as a storage of HSPA5/BiP molecules. Interacts with DNAJC1 (via J domain). Component of an EIF2 complex at least composed of CELF1/CUGBP1, CALR, CALR3, EIF2S1, EIF2S2, HSP90B1 and HSPA5. Part of a large chaperone multiprotein complex comprising DNAJB11, HSP90B1, HSPA5, HYOU, PDIA2, PDIA4, PDIA6, PPIB, SDF2L1, UGGT1 and very small amounts of ERP29, but not, or at very low levels, CALR nor CANX. Interacts with TMEM132A and TRIM21. May form a complex with ERLEC1, OS9, SEL1L and SYVN1. Interacts with DNAJC10. Interacts with DNAJB9/ERdj4; leading to recruit HSPA5/BiP to ERN1/IRE1. Interacts with ERN1/IRE1 (via luminal domain); the interaction takes place following interaction with DNAJB9/ERdj4 and leads to inactivate ERN1/IRE1, the interaction also competitively inhibits ERN1 interaction with MANF. Interacts directly with MANF (via SAP domain); the interaction inhibits ATP binding to HSPA5/BiP and subsequent nucleotide exchange. Interacts with EIF2AK3/PERK (via luminal domain); interaction leads to inactivate EIF2AK3/PERK. Interacts with MX1. Interacts with METTL23. Interacts with CEMIP; the interaction induces calcium leakage from the endoplasmic reticulum and cell migration. Interacts with PCSK4 form; the interaction takes place in the endoplasmic reticulum. Interacts with CIPC. Interacts with CCDC88B (via C-terminus); the interaction opposes ERN1-mediated JNK activation, protecting against apoptosis. Interacts with INPP5K; necessary for INPP5K localization at the endoplasmic reticulum. Interacts with MANF; the interaction is direct. Interacts with LOXL2; leading to activate the ERN1/IRE1-XBP1 pathway of the unfolded protein response. Interacts with CLU under stressed condition; interaction increases CLU protein stability; facilitates its retrotranslocation and redistribution to the mitochondria; cooperatively suppress stress-induced apoptosis by stabilizing mitochondrial membrane integrity. Interacts with CCDC47. Interacts with CLN3. Interacts with ELAPOR1; may regulate the function of HSPA5 in apoptosis and cell proliferation. Interacts with CASP7. Interacts with ILDR2; the interaction stabilizes ILDR2 expression. Interacts with ADAM7. In terms of processing, in unstressed cells, AMPylation at Thr-518 by FICD inactivates the chaperome activity: AMPylated form is locked in a relatively inert state and only weakly stimulated by J domain-containing proteins. In response to endoplasmic reticulum stress, de-AMPylation by the same protein, FICD, restores the chaperone activity.

The protein resides in the endoplasmic reticulum lumen. It localises to the melanosome. The protein localises to the cytoplasm. Its subcellular location is the cell surface. The enzyme catalyses ATP + H2O = ADP + phosphate + H(+). The chaperone activity is regulated by ATP-induced allosteric coupling of the nucleotide-binding (NBD) and substrate-binding (SBD) domains. In the ADP-bound and nucleotide-free (apo) states, the two domains have little interaction. In contrast, in the ATP-bound state the two domains are tightly coupled, which results in drastically accelerated kinetics in both binding and release of polypeptide substrates. J domain-containing co-chaperones (DNAJB9/ERdj4 or DNAJC10/ERdj5) stimulate the ATPase activity and are required for efficient substrate recognition by HSPA5/BiP. Homooligomerization inactivates participating HSPA5/BiP protomers and probably act as reservoirs to store HSPA5/BiP molecules when they are not needed by the cell. In terms of biological role, endoplasmic reticulum chaperone that plays a key role in protein folding and quality control in the endoplasmic reticulum lumen. Involved in the correct folding of proteins and degradation of misfolded proteins via its interaction with DNAJC10/ERdj5, probably to facilitate the release of DNAJC10/ERdj5 from its substrate. Acts as a key repressor of the EIF2AK3/PERK and ERN1/IRE1-mediated unfolded protein response (UPR). In the unstressed endoplasmic reticulum, recruited by DNAJB9/ERdj4 to the luminal region of ERN1/IRE1, leading to disrupt the dimerization of ERN1/IRE1, thereby inactivating ERN1/IRE1. Also binds and inactivates EIF2AK3/PERK in unstressed cells. Accumulation of misfolded protein in the endoplasmic reticulum causes release of HSPA5/BiP from ERN1/IRE1 and EIF2AK3/PERK, allowing their homodimerization and subsequent activation. Plays an auxiliary role in post-translational transport of small presecretory proteins across endoplasmic reticulum (ER). May function as an allosteric modulator for SEC61 channel-forming translocon complex, likely cooperating with SEC62 to enable the productive insertion of these precursors into SEC61 channel. Appears to specifically regulate translocation of precursors having inhibitory residues in their mature region that weaken channel gating. May also play a role in apoptosis and cell proliferation. The polypeptide is Endoplasmic reticulum chaperone BiP (Pongo abelii (Sumatran orangutan)).